Reading from the N-terminus, the 1323-residue chain is Traf2 and NCK-interacting protein kinase (1323 aa).

In terms of domain architecture, Protein kinase spans 25-289 (FELVELVGNG…TEQLMKHPFI (265 aa)). ATP is bound by residues 31-39 (VGNGTYGQV) and lysine 54. The Proton acceptor role is filled by aspartate 153. Phosphothreonine is present on threonine 187. Disordered stretches follow at residues 284-347 (MKHP…LPGE), 397-559 (EQKE…LRPV), and 571-838 (SQGP…NEQY). Residues 288-307 (FIRDQPNERQVRIQLKDHID) show a composition bias toward basic and acidic residues. The segment at 290–1010 (RDQPNERQVR…EIRKYKKRFN (721 aa)) is mediates interaction with NEDD4. Residues 317–335 (DETEYEYSGSEEEEEENDS) show a composition bias toward acidic residues. Phosphoserine is present on residues serine 324 and serine 326. 3 stretches are compositionally biased toward basic and acidic residues: residues 397–470 (EQKE…ERDY), 477–494 (QRQE…HYKE), and 503–513 (AWAKEVEERSR). Serine 531 and serine 541 each carry phosphoserine. Threonine 552 bears the Phosphothreonine mark. Residues serine 571, serine 579, serine 581, and serine 611 each carry the phosphoserine modification. Residues 623–640 (RIEKFDRSSWLRQEEDIP) show a composition bias toward basic and acidic residues. Phosphoserine occurs at positions 649, 651, 659, 672, 678, 691, 735, 737, and 740. The span at 691-726 (SSLQRTSSGSSSSSSTPSSQPSSQGGSQPGSQAGSS) shows a compositional bias: low complexity. 2 stretches are compositionally biased toward basic and acidic residues: residues 746-760 (EPSK…DITR) and 772-790 (KELR…KKVT). The span at 797–810 (EESESSEEEEEDGE) shows a compositional bias: acidic residues. Residue serine 922 is modified to Phosphoserine. The disordered stretch occupies residues 939–960 (FVDPRVYQTSPTDEDEEDDESS). The span at 950–959 (TDEDEEDDES) shows a compositional bias: acidic residues. Residues 1010 to 1297 (NSEILCAALW…KFLCERNDKV (288 aa)) form the CNH domain.

The protein belongs to the protein kinase superfamily. STE Ser/Thr protein kinase family. STE20 subfamily. Interacts (via the CNH domain) with RAP2A (GTP-bound form preferentially); the interaction is direct and required for the activation of TNIK by RAP2A. Interacts with NEDD4; recruits RAP2A to NEDD4. Interacts with TRAF2 and NCK. Interacts with TCF7L2/TCF4 and CTNNB1; the interaction is direct. Interacts with TANC1. In terms of processing, autophosphorylated. Autophosphorylation is activated by RAP2A and induces association to the cytoskeletal fraction.

The protein resides in the nucleus. It localises to the cytoplasm. It is found in the recycling endosome. Its subcellular location is the cytoskeleton. It catalyses the reaction L-seryl-[protein] + ATP = O-phospho-L-seryl-[protein] + ADP + H(+). The catalysed reaction is L-threonyl-[protein] + ATP = O-phospho-L-threonyl-[protein] + ADP + H(+). Its function is as follows. Serine/threonine kinase that acts as an essential activator of the Wnt signaling pathway. Recruited to promoters of Wnt target genes and required to activate their expression. May act by phosphorylating TCF4/TCF7L2. Appears to act upstream of the JUN N-terminal pathway. May play a role in the response to environmental stress. Part of a signaling complex composed of NEDD4, RAP2A and TNIK which regulates neuronal dendrite extension and arborization during development. More generally, it may play a role in cytoskeletal rearrangements and regulate cell spreading. Phosphorylates SMAD1 on Thr-322. Activator of the Hippo signaling pathway which plays a pivotal role in organ size control and tumor suppression by restricting proliferation and promoting apoptosis. MAP4Ks act in parallel to and are partially redundant with STK3/MST2 and STK4/MST2 in the phosphorylation and activation of LATS1/2, and establish MAP4Ks as components of the expanded Hippo pathway. This Mus musculus (Mouse) protein is Traf2 and NCK-interacting protein kinase (Tnik).